The chain runs to 248 residues: MNGLGMQKFEHPLNERTRIYLRIESLFRKLGHSADLTQPFEYQVFFSSLFNMLDILEQVQVKAELGKDLEKLRLQYRAWMDIEGVDQSALLSVLEQISQVHQNLMQTTRPGHSLKEDRFLSALKQRFFIPGGDCCFDLPALHHWLHLPLEVRCRNTHNWMAQLLSLSDALSLWLRLTRETARFEPQIARNGFMQSEMENANLLRLEIPIDQGVYPMISGHKSRFALRFMSFETNKNCEKDIEFTLAVC.

Belongs to the ZapD family. Interacts with FtsZ.

The protein localises to the cytoplasm. In terms of biological role, cell division factor that enhances FtsZ-ring assembly. Directly interacts with FtsZ and promotes bundling of FtsZ protofilaments, with a reduction in FtsZ GTPase activity. The chain is Cell division protein ZapD from Aliivibrio fischeri (strain ATCC 700601 / ES114) (Vibrio fischeri).